We begin with the raw amino-acid sequence, 446 residues long: Low-affinity gluconate transporter (446 aa).

Residue Met-1 is a topological domain, cytoplasmic. A helical membrane pass occupies residues Thr-2 to Met-22. Residues Lys-23–Met-26 lie on the Periplasmic side of the membrane. A helical transmembrane segment spans residues His-27–Leu-47. The Cytoplasmic segment spans residues Asp-48–Met-58. Residues Gly-59–Leu-79 traverse the membrane as a helical segment. Topologically, residues His-80–Gly-109 are periplasmic. The helical transmembrane segment at Leu-110–Phe-130 threads the bilayer. Over Ser-131–Lys-142 the chain is Cytoplasmic. A helical membrane pass occupies residues Leu-143–Ala-163. Over Pro-164 to Gly-176 the chain is Periplasmic. Residues Trp-177 to Trp-197 form a helical membrane-spanning segment. Residues Gly-198 to Ser-225 are Cytoplasmic-facing. The helical transmembrane segment at Phe-226 to Ala-246 threads the bilayer. Over Ala-247–Glu-261 the chain is Periplasmic. A helical membrane pass occupies residues Phe-262–Ala-282. Residues Met-283–Glu-294 are Cytoplasmic-facing. The chain crosses the membrane as a helical span at residues Ile-295–Val-315. The Periplasmic segment spans residues Phe-316–Gly-330. A helical membrane pass occupies residues Glu-331–Val-351. A topological domain (cytoplasmic) is located at residue Arg-352. Residues Ile-353–Ile-373 form a helical membrane-spanning segment. The Periplasmic portion of the chain corresponds to Glu-374 to Ser-387. Residues Ile-388–Phe-408 traverse the membrane as a helical segment. At Gly-409–Thr-424 the chain is on the cytoplasmic side. A helical membrane pass occupies residues Met-425–Leu-445. Residue Ser-446 is a topological domain, periplasmic.

Belongs to the GntP permease family.

It is found in the cell inner membrane. In terms of biological role, part of the gluconate utilization system Gnt-I; low-affinity intake of gluconate. This Escherichia coli O157:H7 protein is Low-affinity gluconate transporter (gntU).